The chain runs to 513 residues: Sucrose transport protein SUC1 (513 aa).

Basic and acidic residues predominate over residues 1–11 (MGAYETEKPTK). The segment at 1–26 (MGAYETEKPTKDAAALETQSPEDFDQ) is disordered. The Cytoplasmic portion of the chain corresponds to 1–32 (MGAYETEKPTKDAAALETQSPEDFDQPSPLRK). The residue at position 20 (S20) is a Phosphoserine. A helical transmembrane segment spans residues 33-53 (IISVASIAAGVQFGWALQLSL). The Extracellular segment spans residues 54–67 (LTPYVQLLGIPHKW). A helical membrane pass occupies residues 68–88 (SSLIWLCGPVSGMIVQPIVGF). Over 89–101 (HSDRCRSKFGRRR) the chain is Cytoplasmic. A helical transmembrane segment spans residues 102 to 122 (PFIATGAALVAVAVFLIGYAA). Residues 123–139 (DFGYKMGDKLEEKVKVR) lie on the Extracellular side of the membrane. Residues 140 to 160 (AIGIFALGFWILDVANNTLQG) form a helical membrane-spanning segment. At 161–178 (PCRAFLADLAAGDAKRTR) the chain is on the cytoplasmic side. A helical membrane pass occupies residues 179-199 (VANAFFSFFMAVGNVLGYAAG). The Extracellular segment spans residues 200 to 224 (SYTNLHKMFPFTMTKACDIYCANLK). Residues 225-245 (TCFFLSITLLLIVTVTSLWYV) traverse the membrane as a helical segment. Topologically, residues 246–282 (NDKQWSPPPRNADDDEKTSSVPLFGEIFGAFKVMKRP) are cytoplasmic. A helical membrane pass occupies residues 283-303 (MWMLLIVTALNWIAWFPFLLF). Over 304 to 334 (DTDWMGREVFGGDSDGNERSKKLYSLGVQSG) the chain is Extracellular. Residues 335 to 355 (AMGLMFNSIVLGFMSLGVEWI) form a helical membrane-spanning segment. Residues 356–365 (GRKLGGAKRL) are Cytoplasmic-facing. A helical transmembrane segment spans residues 366–386 (WGIVNFILAAGLAMTVLVTKF). The Extracellular portion of the chain corresponds to 387–408 (AEDHRKTAGDLAGPSASVKAGA). Residues 409–429 (LSLFAVLGIPLAITFSTPFAL) form a helical membrane-spanning segment. Topologically, residues 430–441 (ASIFSSCSGAGQ) are cytoplasmic. A helical transmembrane segment spans residues 442 to 462 (GLSLGVLNLAIVIPQMIVSLG). The Extracellular segment spans residues 463–474 (GGPFDALFGGGN). Residues 475–495 (LPAFIVAAIAAAISGVLALTV) traverse the membrane as a helical segment. Over 496 to 513 (LPSPPPDAPKATTMGGFH) the chain is Cytoplasmic.

Belongs to the glycoside-pentoside-hexuronide (GPH) cation symporter transporter (TC 2.A.2.4) family. As to expression, expressed in flowers (at protein level). Highly expressed in pollen. Expressed in pollen tubes and root vascular cylinder, pericycle and endodermis.

The protein localises to the membrane. The enzyme catalyses sucrose(out) + H(+)(out) = sucrose(in) + H(+)(in). It functions in the pathway glycan biosynthesis; sucrose metabolism. Inhibited by DEPC, protonophores (e.g. dinitrophenol and carbonyl cyanide m-chlorophenyl-hydrazone (CCCP)), and SH group inhibitors (e.g. N-ethylmaleimide (NEM) and p-chloromercuriphenyl sulphonic acid (PCMPS)). Functionally, responsible for the transport of sucrose into the cell, with the concomitant uptake of protons (symport system). This transport is both voltage- and energy-dependent. Can also transport other glucosides such as maltose, alpha-phenylglucoside and beta-phenylglucoside. May also transport biotin. Required for normal pollen germination and anthocyanin accumulation induced by sucrose. The chain is Sucrose transport protein SUC1 from Arabidopsis thaliana (Mouse-ear cress).